Consider the following 185-residue polypeptide: Ribosome-recycling factor (185 aa).

It belongs to the RRF family.

It localises to the cytoplasm. Responsible for the release of ribosomes from messenger RNA at the termination of protein biosynthesis. May increase the efficiency of translation by recycling ribosomes from one round of translation to another. This Shewanella woodyi (strain ATCC 51908 / MS32) protein is Ribosome-recycling factor.